Here is a 160-residue protein sequence, read N- to C-terminus: Large ribosomal subunit protein uL22c (160 aa).

The protein belongs to the universal ribosomal protein uL22 family. As to quaternary structure, part of the 50S ribosomal subunit.

The protein localises to the plastid. It is found in the chloroplast. Its function is as follows. This protein binds specifically to 23S rRNA. In terms of biological role, the globular domain of the protein is located near the polypeptide exit tunnel on the outside of the subunit, while an extended beta-hairpin is found that lines the wall of the exit tunnel in the center of the 70S ribosome. The sequence is that of Large ribosomal subunit protein uL22c (rpl22) from Capsella bursa-pastoris (Shepherd's purse).